Consider the following 369-residue polypeptide: tRNA 2-selenouridine synthase (369 aa).

In terms of domain architecture, Rhodanese spans 12–136 (FLEDTPLMDV…LRNFLFETTR (125 aa)). Catalysis depends on C95, which acts as the S-selanylcysteine intermediate.

It belongs to the SelU family. As to quaternary structure, monomer.

It catalyses the reaction 5-methylaminomethyl-2-thiouridine(34) in tRNA + selenophosphate + (2E)-geranyl diphosphate + H2O + H(+) = 5-methylaminomethyl-2-selenouridine(34) in tRNA + (2E)-thiogeraniol + phosphate + diphosphate. The catalysed reaction is 5-methylaminomethyl-2-thiouridine(34) in tRNA + (2E)-geranyl diphosphate = 5-methylaminomethyl-S-(2E)-geranyl-thiouridine(34) in tRNA + diphosphate. The enzyme catalyses 5-methylaminomethyl-S-(2E)-geranyl-thiouridine(34) in tRNA + selenophosphate + H(+) = 5-methylaminomethyl-2-(Se-phospho)selenouridine(34) in tRNA + (2E)-thiogeraniol. It carries out the reaction 5-methylaminomethyl-2-(Se-phospho)selenouridine(34) in tRNA + H2O = 5-methylaminomethyl-2-selenouridine(34) in tRNA + phosphate. Involved in the post-transcriptional modification of the uridine at the wobble position (U34) of tRNA(Lys), tRNA(Glu) and tRNA(Gln). Catalyzes the conversion of 2-thiouridine (S2U-RNA) to 2-selenouridine (Se2U-RNA). Acts in a two-step process involving geranylation of 2-thiouridine (S2U) to S-geranyl-2-thiouridine (geS2U) and subsequent selenation of the latter derivative to 2-selenouridine (Se2U) in the tRNA chain. This Pseudomonas paraeruginosa (strain DSM 24068 / PA7) (Pseudomonas aeruginosa (strain PA7)) protein is tRNA 2-selenouridine synthase.